The sequence spans 730 residues: Catalase-peroxidase (730 aa).

Residues 1-21 (MTENKCPVTGKMSKATAGSGT) form a disordered region. Positions 95 to 218 (WHSAGTYRVG…LAAVQMGLIY (124 aa)) form a cross-link, tryptophyl-tyrosyl-methioninium (Trp-Tyr) (with M-244). His96 (proton acceptor) is an active-site residue. Positions 218–244 (YVNPEGPNGNPDPLGSAHDVRETFARM) form a cross-link, tryptophyl-tyrosyl-methioninium (Tyr-Met) (with W-95). His259 lines the heme b pocket.

The protein belongs to the peroxidase family. Peroxidase/catalase subfamily. As to quaternary structure, homodimer or homotetramer. Heme b is required as a cofactor. Post-translationally, formation of the three residue Trp-Tyr-Met cross-link is important for the catalase, but not the peroxidase activity of the enzyme.

It catalyses the reaction H2O2 + AH2 = A + 2 H2O. It carries out the reaction 2 H2O2 = O2 + 2 H2O. Functionally, bifunctional enzyme with both catalase and broad-spectrum peroxidase activity. In Clostridium botulinum (strain Alaska E43 / Type E3), this protein is Catalase-peroxidase.